The primary structure comprises 142 residues: Large ribosomal subunit protein uL11 (142 aa).

The protein belongs to the universal ribosomal protein uL11 family. Part of the ribosomal stalk of the 50S ribosomal subunit. Interacts with L10 and the large rRNA to form the base of the stalk. L10 forms an elongated spine to which L12 dimers bind in a sequential fashion forming a multimeric L10(L12)X complex. In terms of processing, one or more lysine residues are methylated.

Functionally, forms part of the ribosomal stalk which helps the ribosome interact with GTP-bound translation factors. The protein is Large ribosomal subunit protein uL11 of Pseudoalteromonas atlantica (strain T6c / ATCC BAA-1087).